We begin with the raw amino-acid sequence, 77 residues long: Cysteine-rich protein 1 (77 aa).

Residues 2–63 form the LIM zinc-binding domain; sequence PKCPKCSKEV…HPCYAAMFGP (62 aa). N6-acetyllysine is present on residues Lys9 and Lys22. Arg68 is modified (omega-N-methylarginine).

Its function is as follows. Seems to have a role in zinc absorption and may function as an intracellular zinc transport protein. This chain is Cysteine-rich protein 1 (CRIP1), found in Bos taurus (Bovine).